Consider the following 73-residue polypeptide: Translation initiation factor IF-1 (73 aa).

Residues Met1–Arg73 form the S1-like domain.

The protein belongs to the IF-1 family. Component of the 30S ribosomal translation pre-initiation complex which assembles on the 30S ribosome in the order IF-2 and IF-3, IF-1 and N-formylmethionyl-tRNA(fMet); mRNA recruitment can occur at any time during PIC assembly.

It is found in the cytoplasm. Its function is as follows. One of the essential components for the initiation of protein synthesis. Stabilizes the binding of IF-2 and IF-3 on the 30S subunit to which N-formylmethionyl-tRNA(fMet) subsequently binds. Helps modulate mRNA selection, yielding the 30S pre-initiation complex (PIC). Upon addition of the 50S ribosomal subunit IF-1, IF-2 and IF-3 are released leaving the mature 70S translation initiation complex. In Chlamydia pneumoniae (Chlamydophila pneumoniae), this protein is Translation initiation factor IF-1.